We begin with the raw amino-acid sequence, 210 residues long: MKKLTKLLSLTLLFALAGCHSVLDAPTEITQPSVTIPHNDAKWQQHLAQLTQINAYSAKGQFGYISPEERFSSHFDWQYKTPTNFGLTMSSNLSSKSLKLQRNVYGMTISDSEGRSRTEADVAMLMEEIIGVSFPIDQFAYWVKGQPEQQSNYVVNEKRQLAQFDYAVNGTLWKVRFVEYHEDRQPNLPKLIVLENGSQTLKIRIDHWAY.

Positions 1–18 (MKKLTKLLSLTLLFALAG) are cleaved as a signal peptide. Cys19 is lipidated: N-palmitoyl cysteine. Residue Cys19 is the site of S-diacylglycerol cysteine attachment.

This sequence belongs to the LolB family. Monomer.

It is found in the cell outer membrane. In terms of biological role, plays a critical role in the incorporation of lipoproteins in the outer membrane after they are released by the LolA protein. This is Outer-membrane lipoprotein LolB from Glaesserella parasuis serovar 5 (strain SH0165) (Haemophilus parasuis).